Consider the following 94-residue polypeptide: UPF0298 protein SZO_03600 (94 aa).

Belongs to the UPF0298 family.

It localises to the cytoplasm. In Streptococcus equi subsp. zooepidemicus (strain H70), this protein is UPF0298 protein SZO_03600.